A 67-amino-acid polypeptide reads, in one-letter code: Large ribosomal subunit protein bL35 (67 aa).

Residues 22 to 45 (GKIKRWKSGGAHYNTKKSSKRKRH) are disordered. Residues 35–45 (NTKKSSKRKRH) are compositionally biased toward basic residues.

This sequence belongs to the bacterial ribosomal protein bL35 family.

This chain is Large ribosomal subunit protein bL35, found in Aquifex aeolicus (strain VF5).